A 214-amino-acid polypeptide reads, in one-letter code: tRNA (guanine-N(7)-)-methyltransferase (214 aa).

The S-adenosyl-L-methionine site is built by Glu44, Glu69, Asp96, and Asp118. Asp118 is an active-site residue. Lys122 is a substrate binding site. Residues 124–129 (RHEKRR) form an interaction with RNA region. Substrate-binding positions include Asp154 and 192 to 195 (TEYE).

Belongs to the class I-like SAM-binding methyltransferase superfamily. TrmB family.

The catalysed reaction is guanosine(46) in tRNA + S-adenosyl-L-methionine = N(7)-methylguanosine(46) in tRNA + S-adenosyl-L-homocysteine. The protein operates within tRNA modification; N(7)-methylguanine-tRNA biosynthesis. Its function is as follows. Catalyzes the formation of N(7)-methylguanine at position 46 (m7G46) in tRNA. This chain is tRNA (guanine-N(7)-)-methyltransferase, found in Lacticaseibacillus casei (strain BL23) (Lactobacillus casei).